Reading from the N-terminus, the 291-residue chain is Ribosomal RNA small subunit methyltransferase H (291 aa).

S-adenosyl-L-methionine is bound by residues 31–33 (GGY), aspartate 49, phenylalanine 76, aspartate 97, and glutamine 104.

The protein belongs to the methyltransferase superfamily. RsmH family.

It localises to the cytoplasm. It carries out the reaction cytidine(1402) in 16S rRNA + S-adenosyl-L-methionine = N(4)-methylcytidine(1402) in 16S rRNA + S-adenosyl-L-homocysteine + H(+). Its function is as follows. Specifically methylates the N4 position of cytidine in position 1402 (C1402) of 16S rRNA. The polypeptide is Ribosomal RNA small subunit methyltransferase H (Anaplasma marginale (strain Florida)).